The primary structure comprises 818 residues: LPS-assembly protein LptD (818 aa).

Positions 1–33 are cleaved as a signal peptide; that stretch reads MVNETMKHQFKFNPLATAIFTLLCSGSIQSSYA.

It belongs to the LptD family. As to quaternary structure, component of the lipopolysaccharide transport and assembly complex. Interacts with LptE and LptA.

The protein resides in the cell outer membrane. Its function is as follows. Together with LptE, is involved in the assembly of lipopolysaccharide (LPS) at the surface of the outer membrane. This Acinetobacter baumannii (strain ATCC 19606 / DSM 30007 / JCM 6841 / CCUG 19606 / CIP 70.34 / NBRC 109757 / NCIMB 12457 / NCTC 12156 / 81) protein is LPS-assembly protein LptD.